The following is an 874-amino-acid chain: Alanine--tRNA ligase (874 aa).

Zn(2+) contacts are provided by H563, H567, C665, and H669.

Belongs to the class-II aminoacyl-tRNA synthetase family. Zn(2+) is required as a cofactor.

It is found in the cytoplasm. The catalysed reaction is tRNA(Ala) + L-alanine + ATP = L-alanyl-tRNA(Ala) + AMP + diphosphate. In terms of biological role, catalyzes the attachment of alanine to tRNA(Ala) in a two-step reaction: alanine is first activated by ATP to form Ala-AMP and then transferred to the acceptor end of tRNA(Ala). Also edits incorrectly charged Ser-tRNA(Ala) and Gly-tRNA(Ala) via its editing domain. The chain is Alanine--tRNA ligase from Actinobacillus pleuropneumoniae serotype 5b (strain L20).